A 311-amino-acid chain; its full sequence is Probable deoxyhypusine synthase (311 aa).

The active-site Nucleophile is Lys-284.

It belongs to the deoxyhypusine synthase family. It depends on NAD(+) as a cofactor.

The catalysed reaction is [eIF5A protein]-L-lysine + spermidine = [eIF5A protein]-deoxyhypusine + propane-1,3-diamine. It functions in the pathway protein modification; eIF5A hypusination. Functionally, catalyzes the NAD-dependent oxidative cleavage of spermidine and the subsequent transfer of the butylamine moiety of spermidine to the epsilon-amino group of a specific lysine residue of the eIF-5A precursor protein to form the intermediate deoxyhypusine residue. The chain is Probable deoxyhypusine synthase from Sulfolobus acidocaldarius (strain ATCC 33909 / DSM 639 / JCM 8929 / NBRC 15157 / NCIMB 11770).